A 353-amino-acid chain; its full sequence is Methionine import ATP-binding protein MetN (353 aa).

In terms of domain architecture, ABC transporter spans 6–249 (LKNVDVDFPQ…PKQELTKKFV (244 aa)). 41 to 48 (GFSGAGKS) is a binding site for ATP.

It belongs to the ABC transporter superfamily. Methionine importer (TC 3.A.1.24) family. The complex is composed of two ATP-binding proteins (MetN), two transmembrane proteins (MetI) and a solute-binding protein (MetQ).

It localises to the cell membrane. The catalysed reaction is L-methionine(out) + ATP + H2O = L-methionine(in) + ADP + phosphate + H(+). It carries out the reaction D-methionine(out) + ATP + H2O = D-methionine(in) + ADP + phosphate + H(+). Part of the ABC transporter complex MetNIQ involved in methionine import. Responsible for energy coupling to the transport system. The polypeptide is Methionine import ATP-binding protein MetN (Lactobacillus acidophilus (strain ATCC 700396 / NCK56 / N2 / NCFM)).